A 434-amino-acid polypeptide reads, in one-letter code: Transcription elongation factor B polypeptide 3 (434 aa).

The disordered stretch occupies residues 142–161; sequence KPEPVDVHEQQASSSSMSYQ. Residues 151–160 show a composition bias toward polar residues; that stretch reads QQASSSSMSY. The segment at 221–230 is BC box; it reads TLVSLCQTVL. In terms of domain architecture, F-box spans 237-281; that stretch reads IDHVGIVPFDLLKPVLDHASTDQLRHILDVNPMLVEDADEMFHEM. The tract at residues 391–415 is disordered; it reads ITPRGGGVPSTSRSRSNNNNNMNNG.

In terms of assembly, heterotrimer of an A, B and C subunit.

The protein localises to the nucleus. Functionally, SIII, also known as elongin, is a general transcription elongation factor that increases the RNA polymerase II transcription elongation past template-encoded arresting sites. Subunit A is transcriptionally active and its transcription activity is strongly enhanced by binding to the dimeric complex of the SIII regulatory subunits B and C (elongin BC complex). The protein is Transcription elongation factor B polypeptide 3 of Caenorhabditis elegans.